A 145-amino-acid chain; its full sequence is uncharacterized protein (145 aa).

A helical transmembrane segment spans residues 63 to 83 (FLCLPLFLSFLVANLILWLSF).

Its subcellular location is the mitochondrion membrane. This is an uncharacterized protein from Arabidopsis thaliana (Mouse-ear cress).